Consider the following 162-residue polypeptide: CASP-like protein 1C2 (162 aa).

At 1 to 6 (MMKPKR) the chain is on the cytoplasmic side. A helical membrane pass occupies residues 7 to 27 (LLSLLLRLIAVGATLAAVIIM). Topologically, residues 28-49 (ATSHEKGTFFAVSYEAKYTDTP) are extracellular. The chain crosses the membrane as a helical span at residues 50–70 (AFKYFVIANAIVTVYGFLVLF). At 71–79 (HPPGSPLWR) the chain is on the cytoplasmic side. The helical transmembrane segment at 80-100 (LVLALDLVFTMLLISSISAAL) threads the bilayer. Residues 101–130 (AVAQVGKNGNSRAGWLPVCGQVTKYCNQVT) are Extracellular-facing. A helical transmembrane segment spans residues 131 to 151 (GALVAGLIALITYIILLLHSI). At 152-162 (YTFLNPLLEKA) the chain is on the cytoplasmic side.

This sequence belongs to the Casparian strip membrane proteins (CASP) family. Homodimer and heterodimers.

It localises to the cell membrane. This chain is CASP-like protein 1C2, found in Populus trichocarpa (Western balsam poplar).